The primary structure comprises 443 residues: Methyl-coenzyme M reductase II subunit beta (443 aa).

Position 367 (tyrosine 367) interacts with coenzyme M. Glycine 369 is a coenzyme B binding site.

Belongs to the methyl-coenzyme M reductase beta subunit family. MCR is a hexamer of two alpha, two beta, and two gamma chains, forming a dimer of heterotrimers. It depends on coenzyme F430 as a cofactor.

The catalysed reaction is coenzyme B + methyl-coenzyme M = methane + coenzyme M-coenzyme B heterodisulfide. Its pathway is one-carbon metabolism; methyl-coenzyme M reduction; methane from methyl-coenzyme M: step 1/1. Functionally, component of the methyl-coenzyme M reductase (MCR) I that catalyzes the reductive cleavage of methyl-coenzyme M (CoM-S-CH3 or 2-(methylthio)ethanesulfonate) using coenzyme B (CoB or 7-mercaptoheptanoylthreonine phosphate) as reductant which results in the production of methane and the mixed heterodisulfide of CoB and CoM (CoM-S-S-CoB). This is the final step in methanogenesis. The polypeptide is Methyl-coenzyme M reductase II subunit beta (Methanothermobacter marburgensis (strain ATCC BAA-927 / DSM 2133 / JCM 14651 / NBRC 100331 / OCM 82 / Marburg) (Methanobacterium thermoautotrophicum)).